A 161-amino-acid polypeptide reads, in one-letter code: Zinc finger protein KNUCKLES (161 aa).

Residues Met1–Ala33 form a disordered region. The segment at Phe38–His60 adopts a C2H2-type zinc-finger fold. The interval Gly142–Leu161 is disordered. The short motif at Leu155 to Leu159 is the EAR-like (transcriptional repression) element.

First expressed in developing carpel primordia, and later in stamens and ovules of flower buds.

It is found in the nucleus. Functionally, may function as a transcriptional repressor of cellular proliferation that regulates floral determinacy and relative size of basal pattern elements along the proximo-distal axis of the developing gynoecium. The protein is Zinc finger protein KNUCKLES (KNU) of Arabidopsis thaliana (Mouse-ear cress).